The sequence spans 546 residues: DNA replication factor Cdt1 (546 aa).

Residues 1–11 (MEQRRVTDFFA) are compositionally biased toward basic and acidic residues. The PIP-box K+4 motif signature appears at 1-23 (MEQRRVTDFFARRRPGPPRIAPP). 2 disordered regions span residues 1–118 (MEQR…QDQD) and 143–165 (SAQDAGESCTPEAEGRPEEPCGE). A compositionally biased stretch (low complexity) spans 28-45 (RTPSPARPALRAPASATS). Thr-29 bears the Phosphothreonine; by MAPK8 mark. The residue at position 31 (Ser-31) is a Phosphoserine. The Cyclin-binding motif signature appears at 68 to 70 (RRL). Ser-93 carries the phosphoserine; by MAPK8 modification. Residues 150–190 (SCTPEAEGRPEEPCGEKAPAYQRFHALAQPGLPGLVLPYKY) are interaction with GMNN. Over residues 155 to 164 (AEGRPEEPCG) the composition is skewed to basic and acidic residues. Ser-318 carries the post-translational modification Phosphoserine; by MAPK8. Ser-380 and Ser-394 each carry phosphoserine. Residues 383–415 (ALRSAAPSSPGSPRPALPATPPATPPAASPSAL) are disordered. Pro residues predominate over residues 392–410 (PGSPRPALPATPPATPPAA). Positions 451-546 (LERLPELARV…AHQTRAEEGL (96 aa)) are interaction with LRWD1.

Belongs to the Cdt1 family. As to quaternary structure, interacts with GMNN; the interaction inhibits binding of the MCM complex to origins of replication. Interacts with MCM6. Interacts with CDC6; are mutually dependent on one another for loading MCM complexes onto chromatin. Interacts with PCNA. Interacts with LRWD1 during G1 phase and during mitosis. Interacts with NDC80 subunit of the NDC80 complex; leading to kinetochore localization. Interacts with GRWD1; origin binding of GRWD1 is dependent on CDT1. Interacts with KAT7. Interacts with ubiquitin-binding protein FAF1; the interaction is likely to promote CDT1 degradation. In terms of processing, two independent E3 ubiquitin ligase complexes, SCF(SKP2) and the DCX(DTL) complex, mediated CDT1 degradation in S phase. Ubiquitinated by the DCX(DTL) complex, in response to DNA damage, leading to its degradation. Ubiquitination by the DCX(DTL) complex is necessary to ensure proper cell cycle regulation and is PCNA-dependent: interacts with PCNA via its PIP-box, while the presence of the containing the 'K+4' motif in the PIP box, recruit the DCX(DTL) complex, leading to its degradation. Phosphorylation at Thr-29 by CDK2 targets CDT1 for ubiquitination by SCF(SKP2) E3 ubiquitin ligase and subsequent degradation. The interaction with GMNN protects it against ubiquitination. Deubiquitinated by USP37. Ubiquitinated and degraded by the SCF(FBXO31) complex during the G2 phase to prevent re-replication. Phosphorylation by cyclin A-dependent kinases at Thr-29 targets CDT1 for ubiquitynation by SCF(SKP2) E3 ubiquitin ligase and subsequent degradation. Phosphorylated at Thr-29 by MAPK8/JNK1, which blocks replication licensing in response to stress. Binding to GMNN is not affected by phosphorylation.

The protein localises to the nucleus. Its subcellular location is the chromosome. It localises to the centromere. It is found in the kinetochore. In terms of biological role, required for both DNA replication and mitosis. DNA replication licensing factor, required for pre-replication complex assembly. Cooperates with CDC6 and the origin recognition complex (ORC) during G1 phase of the cell cycle to promote the loading of the mini-chromosome maintenance (MCM) complex onto DNA to generate pre-replication complexes (pre-RC). Required also for mitosis by promoting stable kinetochore-microtubule attachments. Potential oncogene. The protein is DNA replication factor Cdt1 of Homo sapiens (Human).